Reading from the N-terminus, the 367-residue chain is MSLANQVLAVNDDLPIRTHKPVHSGKVRSVYWLTEEDSARLIKEKGYDVAPDAPLAIMVISDRISAFDCIWHGEGGLKGVPGKGAALNAISNHWFKLFKDNGLADSHILDIPHPFVWIVQKAKPVKIEAICRKYITGSMWRAYANGEREFCGIQLPEGLEKDKALPNLLMTPSTKGILKGIPGVPEADDVNITRQNIVDNYEAFNFSSAEDIAQYEKLLKEGFNVISQALEGIDQIFVDTKFEFGYVHDAAGNEKLIYMDEVGTPDSSRIWDAKEYQAGNIVENSKEGFRQFLLNHFPDPDILLNKERMPEREALARDNDLPVESLMDISRTYIGIAEKITGKPITLSENPKAEIIEILSKEYGLID.

Belongs to the SAICAR synthetase family.

The enzyme catalyses 5-amino-1-(5-phospho-D-ribosyl)imidazole-4-carboxylate + L-aspartate + ATP = (2S)-2-[5-amino-1-(5-phospho-beta-D-ribosyl)imidazole-4-carboxamido]succinate + ADP + phosphate + 2 H(+). The protein operates within purine metabolism; IMP biosynthesis via de novo pathway; 5-amino-1-(5-phospho-D-ribosyl)imidazole-4-carboxamide from 5-amino-1-(5-phospho-D-ribosyl)imidazole-4-carboxylate: step 1/2. This chain is Phosphoribosylaminoimidazole-succinocarboxamide synthase, found in Vibrio parahaemolyticus serotype O3:K6 (strain RIMD 2210633).